The following is a 342-amino-acid chain: Flagellar P-ring protein (342 aa).

Residues 1-19 form the signal peptide; the sequence is MKRVFLWLIFVLAFHKLLA.

It belongs to the FlgI family. In terms of assembly, the basal body constitutes a major portion of the flagellar organelle and consists of four rings (L,P,S, and M) mounted on a central rod.

It is found in the periplasm. It localises to the bacterial flagellum basal body. Its function is as follows. Assembles around the rod to form the L-ring and probably protects the motor/basal body from shearing forces during rotation. This is Flagellar P-ring protein from Helicobacter pylori (strain P12).